The following is a 782-amino-acid chain: DNA repair and recombination protein RAD54-like (782 aa).

Residues 1–20 (MRRSLAPSQRGGQRLSSRND) show a composition bias toward polar residues. The segment at 1–28 (MRRSLAPSQRGGQRLSSRNDFTPPLLKK) is disordered. Residues 2–9 (RRSLAPSQ) form a required for chromatin remodeling, strand pairing activities and coupling of ATPase activity region. Thr-22 is subject to Phosphothreonine. The 176-residue stretch at 168 to 343 (EGKRGNFNGC…FSLVNFVNPE (176 aa)) folds into the Helicase ATP-binding domain. 181 to 188 (DEMGLGKT) serves as a coordination point for ATP. Residues 294–297 (DEGH) carry the DEGH box motif. The 158-residue stretch at 501–658 (LLDFMLAAIR…NNESAEKHFT (158 aa)) folds into the Helicase C-terminal domain. Over residues 741 to 753 (SQKIEATPATETS) the composition is skewed to polar residues. The interval 741–782 (SQKIEATPATETSVEAKLEPERRKRPAMPLSDDSADEDFQGF) is disordered. Residues 773–782 (DSADEDFQGF) are compositionally biased toward acidic residues.

The protein belongs to the SNF2/RAD54 helicase family. Interacts (via N-terminus) with spn-A/Rad51.

The protein resides in the nucleus. Functionally, involved in mitotic DNA repair and meiotic recombination. Functions in the recombinational DNA repair pathway. Essential for interhomolog gene conversion (GC), but may have a less important role in intersister GC than spn-A/Rad51. In the presence of DNA, spn-A/Rad51 enhances the ATPase activity of okr/Rad54. In Drosophila persimilis (Fruit fly), this protein is DNA repair and recombination protein RAD54-like.